A 320-amino-acid polypeptide reads, in one-letter code: Cytochrome f (320 aa).

Positions M1–A35 are cleaved as a signal peptide. Residues Y36, C56, C59, and H60 each coordinate heme. The helical transmembrane segment at V286–K306 threads the bilayer.

This sequence belongs to the cytochrome f family. As to quaternary structure, the 4 large subunits of the cytochrome b6-f complex are cytochrome b6, subunit IV (17 kDa polypeptide, petD), cytochrome f and the Rieske protein, while the 4 small subunits are PetG, PetL, PetM and PetN. The complex functions as a dimer. Requires heme as cofactor.

The protein localises to the plastid. Its subcellular location is the chloroplast thylakoid membrane. Its function is as follows. Component of the cytochrome b6-f complex, which mediates electron transfer between photosystem II (PSII) and photosystem I (PSI), cyclic electron flow around PSI, and state transitions. This is Cytochrome f from Olimarabidopsis pumila (Dwarf rocket).